A 238-amino-acid polypeptide reads, in one-letter code: MTHVDIAATIAPEDKLSKTLLKDIKVNEESIDIIELRIDQWPSFNKALLNEVIKQLKIFHLKILVTYRTSVQGGKGAVNEQEYLNILGELIECPQFDMIDIEWSSAVKIEKYTHLVQRAQQKGLEVVLSHHNFQETPALDELKFIYFKMQKLNPEYLKLAVMPKCQEDVLHLLEAMSLTAKHTTCRIVGISMSSLGKVSRIAQGVFGGTLSYGCIEEPQAPGQIHVSKLKSMVSFYED.

3-dehydroquinate contacts are provided by residues 35–37 and Arg-68; that span reads ELR. His-131 functions as the Proton donor/acceptor in the catalytic mechanism. Lys-158 serves as the catalytic Schiff-base intermediate with substrate. Arg-200 and Gln-223 together coordinate 3-dehydroquinate.

This sequence belongs to the type-I 3-dehydroquinase family. Homodimer.

It catalyses the reaction 3-dehydroquinate = 3-dehydroshikimate + H2O. It functions in the pathway metabolic intermediate biosynthesis; chorismate biosynthesis; chorismate from D-erythrose 4-phosphate and phosphoenolpyruvate: step 3/7. Functionally, involved in the third step of the chorismate pathway, which leads to the biosynthesis of aromatic amino acids. Catalyzes the cis-dehydration of 3-dehydroquinate (DHQ) and introduces the first double bond of the aromatic ring to yield 3-dehydroshikimate. This chain is 3-dehydroquinate dehydratase, found in Staphylococcus epidermidis (strain ATCC 35984 / DSM 28319 / BCRC 17069 / CCUG 31568 / BM 3577 / RP62A).